The chain runs to 290 residues: UPF0046 protein K07C11.7 (290 aa).

An N-terminal signal peptide occupies residues 1–22 (MFHFSIGTVLISICWLAQWMEA). N-linked (GlcNAc...) asparagine glycosylation is present at Asn204.

It belongs to the UPF0046 family.

The protein is UPF0046 protein K07C11.7 of Caenorhabditis elegans.